Consider the following 229-residue polypeptide: UPF0758 protein MM_2791 (229 aa).

Residues 106–228 enclose the MPN domain; it reads KISSPKDVYT…YVSLKDEGFV (123 aa). Residues H177, H179, and D190 each contribute to the Zn(2+) site. The JAMM motif signature appears at 177 to 190; it reads HNHPSGDPSPSRED.

Belongs to the UPF0758 family.

In Methanosarcina mazei (strain ATCC BAA-159 / DSM 3647 / Goe1 / Go1 / JCM 11833 / OCM 88) (Methanosarcina frisia), this protein is UPF0758 protein MM_2791.